The following is a 620-amino-acid chain: U1 small nuclear ribonucleoprotein component SNU71 (620 aa).

The segment covering 59 to 75 (NSNDDGSIHNSDQNTGL) has biased composition (polar residues). Disordered stretches follow at residues 59-82 (NSNDDGSIHNSDQNTGLNKDKEAS), 246-270 (TDERNSKKEQLDDSSTQYKVDTNTL), 323-373 (RKNH…NRRY), 428-452 (HRSFKEQEERRDEEDRAKNGNAKEL), and 509-537 (SVESSSEDEGYRESELPPTKPSERSAAED). Positions 246 to 256 (TDERNSKKEQL) are enriched in basic and acidic residues. Over residues 258 to 270 (DSSTQYKVDTNTL) the composition is skewed to polar residues. The stretch at 296-385 (EKEKKMKSTY…MLHQLHSNTE (90 aa)) forms a coiled coil. The segment covering 335–355 (TEEEDTNMEDEDEEDDTEDDL) has biased composition (acidic residues). Basic and acidic residues-rich tracts occupy residues 356-373 (ALEKRKEERDLEESNRRY) and 431-445 (FKEQEERRDEEDRAK). 2 positions are modified to phosphoserine: Ser512 and Ser514. The span at 517-537 (EGYRESELPPTKPSERSAAED) shows a compositional bias: basic and acidic residues.

The protein belongs to the SNU71 family. In terms of assembly, component of the 18S U1 snRNP particle, a subcomplex of the spliceosome.

The protein resides in the cytoplasm. The protein localises to the nucleus. Functionally, component of the U1 snRNP particle, which recognizes and binds the 5'-splice site of pre-mRNA. Together with other non-snRNP factors, U1 snRNP forms the spliceosomal commitment complex, that targets pre-mRNA to the splicing pathway. This Saccharomyces cerevisiae (strain ATCC 204508 / S288c) (Baker's yeast) protein is U1 small nuclear ribonucleoprotein component SNU71 (SNU71).